The sequence spans 182 residues: Receptor activity-modifying protein 2 (182 aa).

A signal peptide spans 1–45; the sequence is MAPLRVERAPGGSQLAVTSAQRPAALRLPPLLLLLLLLLLGAVST. Topologically, residues 46-150 are extracellular; the sequence is SPESLNQSHP…VQPTFSDPPE (105 aa). Asn-51, Asn-92, and Asn-137 each carry an N-linked (GlcNAc...) asparagine glycan. 2 cysteine pairs are disulfide-bonded: Cys-76–Cys-106 and Cys-91–Cys-138. Residues 151 to 172 form a helical membrane-spanning segment; that stretch reads DVLLAMIIAPICLIPFLVTLVV. At 173–182 the chain is on the cytoplasmic side; it reads WRSKDGDAQA.

This sequence belongs to the RAMP family. As to quaternary structure, heterodimer of CALCRL and RAMP2; the interaction forms the receptor complex for adrenomedullin/ADM. Heterodimer of CALCR and RAMP2; interaction forms the AMYR2 receptor complex for calcitonin/CALC and amylin/IAPP.

It localises to the cell membrane. Functionally, accessory protein that interacts with and modulates the function of G-protein coupled receptors including calcitonin gene-related peptide type 1 receptor (CALCRL) and calcitonin receptor (CALCR). Required for the transport of CALCRL to the plasma membrane. Together with CALCRL, form a receptor complex for adrenomedullin/ADM. Together with CALCR, act as a receptor complex for calcitonin/CT/CALC. Together with CALCR, also act as a receptor complex for amylin/IAPP. This Rattus norvegicus (Rat) protein is Receptor activity-modifying protein 2.